The primary structure comprises 475 residues: Glutamyl-tRNA(Gln) amidotransferase subunit A (475 aa).

Active-site charge relay system residues include Lys-69 and Ser-144. Ser-168 (acyl-ester intermediate) is an active-site residue.

Belongs to the amidase family. GatA subfamily. In terms of assembly, heterotrimer of A, B and C subunits.

It catalyses the reaction L-glutamyl-tRNA(Gln) + L-glutamine + ATP + H2O = L-glutaminyl-tRNA(Gln) + L-glutamate + ADP + phosphate + H(+). Its function is as follows. Allows the formation of correctly charged Gln-tRNA(Gln) through the transamidation of misacylated Glu-tRNA(Gln) in organisms which lack glutaminyl-tRNA synthetase. The reaction takes place in the presence of glutamine and ATP through an activated gamma-phospho-Glu-tRNA(Gln). This Methanococcoides burtonii (strain DSM 6242 / NBRC 107633 / OCM 468 / ACE-M) protein is Glutamyl-tRNA(Gln) amidotransferase subunit A.